A 37-amino-acid chain; its full sequence is Neuropeptide Y2-like conopeptide (37 aa).

Position 37 is a tyrosine amide (tyrosine 37).

The protein belongs to the NPY family. In terms of tissue distribution, expressed by the venom duct.

The protein localises to the secreted. In terms of biological role, causes hyperactivity such as jumping, rapid circling and tail flicking, after intraventicular injection into mouse brain. This Conus betulinus (Beech cone) protein is Neuropeptide Y2-like conopeptide.